Here is a 278-residue protein sequence, read N- to C-terminus: 4-deoxy-L-threo-5-hexosulose-uronate ketol-isomerase (278 aa).

Positions 196, 198, 203, and 245 each coordinate Zn(2+).

It belongs to the KduI family. Zn(2+) is required as a cofactor.

The enzyme catalyses 5-dehydro-4-deoxy-D-glucuronate = 3-deoxy-D-glycero-2,5-hexodiulosonate. The protein operates within glycan metabolism; pectin degradation; 2-dehydro-3-deoxy-D-gluconate from pectin: step 4/5. Functionally, catalyzes the isomerization of 5-dehydro-4-deoxy-D-glucuronate to 3-deoxy-D-glycero-2,5-hexodiulosonate. This chain is 4-deoxy-L-threo-5-hexosulose-uronate ketol-isomerase, found in Yersinia pestis bv. Antiqua (strain Antiqua).